Here is a 147-residue protein sequence, read N- to C-terminus: Phosphoribosyl-AMP cyclohydrolase (147 aa).

Residue Asp97 participates in Mg(2+) binding. Cys98 contacts Zn(2+). Asp99 and Asp101 together coordinate Mg(2+). Zn(2+) is bound by residues Cys114 and Cys121.

The protein belongs to the PRA-CH family. As to quaternary structure, homodimer. Requires Mg(2+) as cofactor. Zn(2+) is required as a cofactor.

It localises to the cytoplasm. It carries out the reaction 1-(5-phospho-beta-D-ribosyl)-5'-AMP + H2O = 1-(5-phospho-beta-D-ribosyl)-5-[(5-phospho-beta-D-ribosylamino)methylideneamino]imidazole-4-carboxamide. It participates in amino-acid biosynthesis; L-histidine biosynthesis; L-histidine from 5-phospho-alpha-D-ribose 1-diphosphate: step 3/9. In terms of biological role, catalyzes the hydrolysis of the adenine ring of phosphoribosyl-AMP. This Hydrogenovibrio crunogenus (strain DSM 25203 / XCL-2) (Thiomicrospira crunogena) protein is Phosphoribosyl-AMP cyclohydrolase.